The primary structure comprises 418 residues: Putative ion-transport protein YfeO (418 aa).

11 helical membrane-spanning segments follow: residues 9-31 (MLLL…IVVM), 55-77 (SPLW…IRFS), 90-112 (LIGA…LGLA), 122-140 (PIMT…RLLP), 147-169 (WTIL…AALI), 189-211 (PLMA…FSLP), 223-244 (ILSG…VWCL), 259-281 (LVLG…VSLF), 301-323 (YFLL…FRGG), 343-363 (VPAV…VLVV), and 376-398 (VVVP…WLLL).

The protein belongs to the chloride channel (TC 2.A.49) family.

It localises to the cell membrane. This chain is Putative ion-transport protein YfeO (yfeO), found in Escherichia coli O157:H7.